A 549-amino-acid polypeptide reads, in one-letter code: Glucose-6-phosphate isomerase (549 aa).

N6-acetyllysine is present on residues Lys80, Lys228, and Lys234. Glu355 (proton donor) is an active-site residue. Residues His386 and Lys514 contribute to the active site.

It belongs to the GPI family.

Its subcellular location is the cytoplasm. The enzyme catalyses alpha-D-glucose 6-phosphate = beta-D-fructose 6-phosphate. The protein operates within carbohydrate biosynthesis; gluconeogenesis. Its pathway is carbohydrate degradation; glycolysis; D-glyceraldehyde 3-phosphate and glycerone phosphate from D-glucose: step 2/4. Functionally, catalyzes the reversible isomerization of glucose-6-phosphate to fructose-6-phosphate. This is Glucose-6-phosphate isomerase from Shigella flexneri.